The chain runs to 215 residues: Transmembrane protein 267 (215 aa).

3 consecutive transmembrane segments (helical) span residues 77 to 97, 114 to 134, and 178 to 198; these read FCEV…HFFL, PLHC…LMQL, and YWLY…IMCL.

The protein localises to the membrane. This is Transmembrane protein 267 (tmem267) from Xenopus laevis (African clawed frog).